Here is a 463-residue protein sequence, read N- to C-terminus: Perilipin-5 (463 aa).

The segment at 1–32 (MDQRGEDTTLAPHSRMSGDQTAQDPGSSLGEL) is disordered. The segment at 1–123 (MDQRGEDTTL…KLEEKLPFLQ (123 aa)) is interaction with LIPE. The segment at 1-188 (MDQRGEDTTL…RFLPMTEAEL (188 aa)) is essential for lipid droplet targeting. A phosphoserine mark is found at serine 17, serine 163, and serine 337. Positions 17–26 (SGDQTAQDPG) are enriched in polar residues. The segment at 200 to 463 (VGTVEEQRQQ…KHTMMPELDF (264 aa)) is interaction with PNPLA2 and ABHD5. Residues 433 to 463 (AWEAESADPGGQEAEPPRGQGKHTMMPELDF) are disordered. Residues 444–463 (QEAEPPRGQGKHTMMPELDF) form a necessary for mitochondria recruitment at the lipid droplet surface region.

The protein belongs to the perilipin family. Homooligomer. Interacts with PNPLA2; prevents interaction of PNPLA2 with ABHD5. Interacts with ABHD5; targets ABHD5 to lipid droplets and promotes interaction of ABHD5 with PNPLA2. Interacts with LIPE. In terms of processing, phosphorylated by PKA. Phosphorylated on serine in skeletal muscle at rest or with lipolytic stimulation. As to expression, highly expressed in oxidative tissues, including heart, liver, brown adipose tissue (BAT) and slow-twitch fibers of skeletal muscle. Lower expression in epididymal white adipose tissue and anterior tibialis and quadriceps. Expressed in adrenal glands. Isoform 2 has the highest expression in heart.

The protein resides in the lipid droplet. The protein localises to the cytoplasm. Its subcellular location is the mitochondrion. In terms of biological role, lipid droplet-associated protein that maintains the balance between lipogenesis and lipolysis and also regulates fatty acid oxidation in oxidative tissues. Recruits mitochondria to the surface of lipid droplets and is involved in lipid droplet homeostasis by regulating both the storage of fatty acids in the form of triglycerides and the release of fatty acids for mitochondrial fatty acid oxidation. In lipid droplet triacylglycerol hydrolysis, plays a role as a scaffolding protein for three major key lipolytic players: ABHD5, PNPLA2 and LIPE. Reduces the triacylglycerol hydrolase activity of PNPLA2 by recruiting and sequestering PNPLA2 to lipid droplets. Phosphorylation by PKA enables lipolysis probably by promoting release of ABHD5 from the perilipin scaffold and by facilitating interaction of ABHD5 with PNPLA2. Also increases lipolysis through interaction with LIPE and upon PKA-mediated phosphorylation of LIPE. The polypeptide is Perilipin-5 (Plin5) (Mus musculus (Mouse)).